Reading from the N-terminus, the 47-residue chain is Protein PsbN (47 aa).

A helical transmembrane segment spans residues 7–29 (VAISISCLLISFTGYALYTAFGN).

The protein belongs to the PsbN family.

The protein resides in the plastid membrane. In terms of biological role, may play a role in photosystem I and II biogenesis. This Aneura mirabilis (Parasitic liverwort) protein is Protein PsbN.